The following is a 141-amino-acid chain: IPYSVLKKSGFVIAEADGNPEEFLDELMEMIIESKEKEAKRRKAQDTVIEPIALEKQGEYFINLERVQNNNPGISSKKILQPFLKNKPFRELKIVCNHIPKWIENELMTLGMKFEVKKLTEGEFEVKVYNQFNDEKTLVNR.

This is an uncharacterized protein from Clostridium pasteurianum.